The sequence spans 461 residues: UDP-glycosyltransferase 88B1 (461 aa).

Residues serine 278, 340–341 (WA), 358–366 (HCGWNSSLE), and 380–383 (YAEQ) each bind UDP-alpha-D-glucose.

This sequence belongs to the UDP-glycosyltransferase family.

In terms of biological role, may glycosylate diterpenes or flavonols in leaves. In Stevia rebaudiana (Stevia), this protein is UDP-glycosyltransferase 88B1.